The following is a 332-amino-acid chain: L-lactate dehydrogenase A chain (332 aa).

N-acetylalanine is present on alanine 2. At lysine 5 the chain carries N6-acetyllysine; alternate. Residue lysine 5 is modified to N6-succinyllysine; alternate. An N6-acetyllysine modification is found at lysine 14. Residue 29 to 57 (GAVGMACAISILMKDLADELALVDVIEDK) participates in NAD(+) binding. An N6-acetyllysine; alternate modification is found at lysine 57. A Glycyl lysine isopeptide (Lys-Gly) (interchain with G-Cter in SUMO2); alternate cross-link involves residue lysine 57. Lysine 81 is subject to N6-acetyllysine. Arginine 99 contacts NAD(+). Arginine 106 is a binding site for substrate. Lysine 118 carries the post-translational modification N6-acetyllysine; alternate. An N6-succinyllysine; alternate modification is found at lysine 118. Position 126 is an N6-acetyllysine (lysine 126). Asparagine 138 is an NAD(+) binding site. The substrate site is built by asparagine 138 and arginine 169. Histidine 193 acts as the Proton acceptor in catalysis. Position 213 is a phosphoserine (serine 213). N6-acetyllysine is present on residues lysine 224 and lysine 232. Tyrosine 239 bears the Phosphotyrosine mark. Lysine 243 is modified (N6-acetyllysine). A substrate-binding site is contributed by threonine 248. At threonine 309 the chain carries Phosphothreonine. Position 318 is an N6-acetyllysine; alternate (lysine 318). Lysine 318 carries the post-translational modification N6-succinyllysine; alternate. Threonine 322 carries the phosphothreonine modification.

This sequence belongs to the LDH/MDH superfamily. LDH family. In terms of assembly, homotetramer. Interacts with PTEN upstream reading frame protein MP31. In terms of processing, ISGylated.

Its subcellular location is the cytoplasm. It carries out the reaction (S)-lactate + NAD(+) = pyruvate + NADH + H(+). It functions in the pathway fermentation; pyruvate fermentation to lactate; (S)-lactate from pyruvate: step 1/1. Functionally, interconverts simultaneously and stereospecifically pyruvate and lactate with concomitant interconversion of NADH and NAD(+). This is L-lactate dehydrogenase A chain (Ldha) from Rattus norvegicus (Rat).